Reading from the N-terminus, the 119-residue chain is Flagellar transcriptional regulator FlhD (119 aa).

The protein belongs to the FlhD family. Homodimer; disulfide-linked. Forms a heterohexamer composed of two FlhC and four FlhD subunits. Each FlhC binds a FlhD dimer, forming a heterotrimer, and a hexamer assembles by dimerization of two heterotrimers.

The protein resides in the cytoplasm. Functionally, functions in complex with FlhC as a master transcriptional regulator that regulates transcription of several flagellar and non-flagellar operons by binding to their promoter region. Activates expression of class 2 flagellar genes, including fliA, which is a flagellum-specific sigma factor that turns on the class 3 genes. Also regulates genes whose products function in a variety of physiological pathways. In Serratia marcescens, this protein is Flagellar transcriptional regulator FlhD.